We begin with the raw amino-acid sequence, 180 residues long: Large ribosomal subunit protein uL5 (180 aa).

Belongs to the universal ribosomal protein uL5 family. Part of the 50S ribosomal subunit; part of the 5S rRNA/L5/L18/L25 subcomplex. Contacts the 5S rRNA and the P site tRNA. Forms a bridge to the 30S subunit in the 70S ribosome.

Its function is as follows. This is one of the proteins that bind and probably mediate the attachment of the 5S RNA into the large ribosomal subunit, where it forms part of the central protuberance. In the 70S ribosome it contacts protein S13 of the 30S subunit (bridge B1b), connecting the 2 subunits; this bridge is implicated in subunit movement. Contacts the P site tRNA; the 5S rRNA and some of its associated proteins might help stabilize positioning of ribosome-bound tRNAs. This chain is Large ribosomal subunit protein uL5, found in Synechocystis sp. (strain ATCC 27184 / PCC 6803 / Kazusa).